The following is a 277-amino-acid chain: MTMQPLIKLYDGRLMPQLGLGVWQASIQETELAVSKALEVGYRSIDTAAIYKNEEGVGKALKAAAVARDELFITTKLWNDDQHNPQQALETSLQKLQLDYVDLYLIHWPDPKQDHYVSAWRELVTLKEQGLIRSIGVCNFHIPHLQRLIDETGIAPTVNQIELHPLLQQRQLHAWNATHHIATESWSPLAQGGKGVFDQEIIRKLAQQYNKTPAQIVIRWHLDSGLIVIPKSVTPARIRENFEVFDFKLQKEELLAITKLDCGKRLGPDPEVFGSDR.

The active-site Proton donor is the Tyr-51. Position 107 (His-107) interacts with substrate. Residue 187-241 (SPLAQGGKGVFDQEIIRKLAQQYNKTPAQIVIRWHLDSGLIVIPKSVTPARIREN) coordinates NADP(+).

It belongs to the aldo/keto reductase family. In terms of assembly, monomer.

Its subcellular location is the cytoplasm. It catalyses the reaction hydroxyacetone + NADP(+) = methylglyoxal + NADPH + H(+). In terms of biological role, aldo-keto reductase that significantly contributes to cellular methylglyoxal detoxification by catalyzing the NADPH-dependent conversion of methylglyoxal to acetol. In Yersinia pestis, this protein is Methylglyoxal reductase DkgA.